The chain runs to 247 residues: Granulin (247 aa).

This sequence belongs to the polyhedrin family.

Component of the virus occlusion bodies, which are large proteinaceous structures, that protect the virus from the outside environment for extended periods until they are ingested by insect larvae. The sequence is that of Granulin from Agrotis segetum granulosis virus (AsGV).